The chain runs to 327 residues: Ribose 1,5-bisphosphate isomerase (327 aa).

Residues 25-28 (RGAA) and Arg68 contribute to the substrate site. The active-site Proton acceptor is the Cys133. The active-site Proton donor is Asp202. Residues 212–213 (NK) and Lys238 contribute to the substrate site.

The protein belongs to the eIF-2B alpha/beta/delta subunits family. R15P isomerase subfamily.

The catalysed reaction is alpha-D-ribose 1,5-bisphosphate = D-ribulose 1,5-bisphosphate. Functionally, isomerase involved in the non-carboxylating pentose bisphosphate pathway, a nucleoside degradation pathway present in some halophilic archaea. Catalyzes the isomerization of ribose 1,5-bisphosphate (R15P) to ribulose 1,5-bisphosphate (RuBP). The polypeptide is Ribose 1,5-bisphosphate isomerase (Haloterrigena turkmenica (strain ATCC 51198 / DSM 5511 / JCM 9101 / NCIMB 13204 / VKM B-1734 / 4k) (Halococcus turkmenicus)).